The chain runs to 156 residues: Ribosomal RNA large subunit methyltransferase H (156 aa).

S-adenosyl-L-methionine-binding positions include Leu-73, Gly-104, and 123 to 128; that span reads LSALTL.

This sequence belongs to the RNA methyltransferase RlmH family. In terms of assembly, homodimer.

Its subcellular location is the cytoplasm. The enzyme catalyses pseudouridine(1915) in 23S rRNA + S-adenosyl-L-methionine = N(3)-methylpseudouridine(1915) in 23S rRNA + S-adenosyl-L-homocysteine + H(+). In terms of biological role, specifically methylates the pseudouridine at position 1915 (m3Psi1915) in 23S rRNA. This chain is Ribosomal RNA large subunit methyltransferase H, found in Vibrio vulnificus (strain CMCP6).